We begin with the raw amino-acid sequence, 552 residues long: DNA ligase (552 aa).

An ATP-binding site is contributed by Glu-229. The active-site N6-AMP-lysine intermediate is Lys-231. Arg-236 and Glu-283 together coordinate ATP. 2 residues coordinate Mg(2+): Glu-283 and Glu-377. ATP is bound by residues Lys-382 and Lys-397.

The protein belongs to the ATP-dependent DNA ligase family. Interacts with host TOP2A and TOP2B. The cofactor is Mg(2+).

It is found in the host cytoplasm. The catalysed reaction is ATP + (deoxyribonucleotide)n-3'-hydroxyl + 5'-phospho-(deoxyribonucleotide)m = (deoxyribonucleotide)n+m + AMP + diphosphate.. Its function is as follows. DNA ligase that seals nicks in double-stranded DNA during DNA replication, DNA recombination and DNA repair. Recruits cellular topoisomerase II to sites of viral replication and assembly. The polypeptide is DNA ligase (OPG180) (Vaccinia virus (strain Ankara) (VACV)).